The chain runs to 211 residues: Adenylate kinase (211 aa).

10–15 (GAGKGT) contributes to the ATP binding site. The segment at 30 to 59 (STGGILRAAIQKQTALGKKVQKVVEVGGLV) is NMP. AMP contacts are provided by residues threonine 31, arginine 36, 57–59 (GLV), 85–88 (GFPR), and glutamine 92. Positions 121–158 (GRRVCSACGSSYHVLFAQPKREGVCDRCRGVLVVREDD) are LID. Arginine 122 is a binding site for ATP. Residues cysteine 125 and cysteine 128 each coordinate Zn(2+). 131–132 (SY) serves as a coordination point for ATP. The Zn(2+) site is built by cysteine 145 and cysteine 148. Residues arginine 155 and arginine 166 each contribute to the AMP site. Proline 194 lines the ATP pocket.

It belongs to the adenylate kinase family. In terms of assembly, monomer.

It is found in the cytoplasm. It carries out the reaction AMP + ATP = 2 ADP. The protein operates within purine metabolism; AMP biosynthesis via salvage pathway; AMP from ADP: step 1/1. In terms of biological role, catalyzes the reversible transfer of the terminal phosphate group between ATP and AMP. Plays an important role in cellular energy homeostasis and in adenine nucleotide metabolism. The sequence is that of Adenylate kinase from Treponema pallidum (strain Nichols).